A 129-amino-acid chain; its full sequence is Putative membrane protein insertion efficiency factor (129 aa).

It belongs to the UPF0161 family.

The protein resides in the cell inner membrane. In terms of biological role, could be involved in insertion of integral membrane proteins into the membrane. The chain is Putative membrane protein insertion efficiency factor from Rhodopseudomonas palustris (strain TIE-1).